A 187-amino-acid polypeptide reads, in one-letter code: UPF0301 protein YqgE (187 aa).

The protein belongs to the UPF0301 (AlgH) family.

This chain is UPF0301 protein YqgE, found in Shigella boydii serotype 4 (strain Sb227).